The primary structure comprises 356 residues: Chavicol O-methyltransferase (356 aa).

S-adenosyl-L-methionine-binding residues include Gly202, Asp225, Asp245, Met246, and Lys259. His263 acts as the Proton acceptor in catalysis.

This sequence belongs to the class I-like SAM-binding methyltransferase superfamily. Cation-independent O-methyltransferase family. COMT subfamily. Homodimer. As to expression, specifically expressed in the peltate glandular trichomes on the surface of the young basil leaves.

It carries out the reaction (E)-isoeugenol + S-adenosyl-L-methionine = (E)-isomethyleugenol + S-adenosyl-L-homocysteine + H(+). Its pathway is aromatic compound metabolism; phenylpropanoid biosynthesis. In terms of biological role, phenylpropene O-methyltransferase that catalyzes the methylation of the para-4-hydroxyl of chavicol to methylchavicol. Can also convert eugenol to methyleugenol but with less affinity. In Ocimum basilicum (Sweet basil), this protein is Chavicol O-methyltransferase (CVOMT1).